Consider the following 555-residue polypeptide: Probable apyrase 6 (555 aa).

The span at 1–10 shows a compositional bias: basic residues; sequence MRRSHARSRV. The tract at residues 1 to 45 is disordered; the sequence is MRRSHARSRVKNSSSSKSDMDPIKFQIRSGNRAPSSSSTYTLTKP. Residues 1 to 55 are Cytoplasmic-facing; it reads MRRSHARSRVKNSSSSKSDMDPIKFQIRSGNRAPSSSSTYTLTKPNSKHAKSNLL. A compositionally biased stretch (polar residues) spans 28–45; it reads RSGNRAPSSSSTYTLTKP. The chain crosses the membrane as a helical span at residues 56 to 76; it reads LTVGSISVVLGVLFLCYSILF. The Extracellular segment spans residues 77–512; the sequence is SGGNLRGSLR…HALFSNHPKT (436 aa). Residue 89–99 coordinates ATP; the sequence is VVIDGGSTGTR. Glutamate 212 acts as the Proton acceptor in catalysis. 236-246 provides a ligand contact to ATP; the sequence is GIVELGGASAQ. N-linked (GlcNAc...) asparagine glycans are attached at residues asparagine 267 and asparagine 348. The helical transmembrane segment at 513-533 threads the bilayer; the sequence is LHYLIGIPILMTVLVYLVTKW. At 534–555 the chain is on the cytoplasmic side; sequence RKPQLKTIYDLEKGRYIVTRIR.

Belongs to the GDA1/CD39 NTPase family. It depends on Ca(2+) as a cofactor. As to expression, detected in mature pollen grains (at the protein level). Also expressed in the veins and hydathode regions of rosette leaves.

Its subcellular location is the cytoplasmic vesicle membrane. The enzyme catalyses a ribonucleoside 5'-triphosphate + 2 H2O = a ribonucleoside 5'-phosphate + 2 phosphate + 2 H(+). Its function is as follows. Catalyzes the hydrolysis of phosphoanhydride bonds of nucleoside tri- and di-phosphates. Involved in the regulation of pollen and anther development. The polypeptide is Probable apyrase 6 (APY6) (Arabidopsis thaliana (Mouse-ear cress)).